A 459-amino-acid chain; its full sequence is Phosphoglucosamine mutase (459 aa).

The active-site Phosphoserine intermediate is the serine 102. Residues serine 102, aspartate 243, aspartate 245, and aspartate 247 each contribute to the Mg(2+) site. Residue serine 102 is modified to Phosphoserine.

Belongs to the phosphohexose mutase family. Mg(2+) serves as cofactor. In terms of processing, activated by phosphorylation.

It catalyses the reaction alpha-D-glucosamine 1-phosphate = D-glucosamine 6-phosphate. Catalyzes the conversion of glucosamine-6-phosphate to glucosamine-1-phosphate. In Bartonella quintana (strain Toulouse) (Rochalimaea quintana), this protein is Phosphoglucosamine mutase.